The sequence spans 308 residues: Probable manganese-dependent inorganic pyrophosphatase (308 aa).

Mn(2+)-binding residues include histidine 9, aspartate 13, aspartate 15, aspartate 74, histidine 96, and aspartate 148.

It belongs to the PPase class C family. Mn(2+) serves as cofactor.

It is found in the cytoplasm. It carries out the reaction diphosphate + H2O = 2 phosphate + H(+). The chain is Probable manganese-dependent inorganic pyrophosphatase from Oceanobacillus iheyensis (strain DSM 14371 / CIP 107618 / JCM 11309 / KCTC 3954 / HTE831).